The primary structure comprises 275 residues: Formamidopyrimidine-DNA glycosylase (275 aa).

Catalysis depends on Pro-2, which acts as the Schiff-base intermediate with DNA. Glu-3 (proton donor) is an active-site residue. The active-site Proton donor; for beta-elimination activity is the Lys-58. His-93, Arg-111, and Arg-156 together coordinate DNA. Residues 241–275 (FVYDRAGQPCRVCGTPIRQIVQGQRSTYYCPTCQR) form an FPG-type zinc finger. Arg-265 acts as the Proton donor; for delta-elimination activity in catalysis.

This sequence belongs to the FPG family. As to quaternary structure, monomer. The cofactor is Zn(2+).

The catalysed reaction is Hydrolysis of DNA containing ring-opened 7-methylguanine residues, releasing 2,6-diamino-4-hydroxy-5-(N-methyl)formamidopyrimidine.. The enzyme catalyses 2'-deoxyribonucleotide-(2'-deoxyribose 5'-phosphate)-2'-deoxyribonucleotide-DNA = a 3'-end 2'-deoxyribonucleotide-(2,3-dehydro-2,3-deoxyribose 5'-phosphate)-DNA + a 5'-end 5'-phospho-2'-deoxyribonucleoside-DNA + H(+). In terms of biological role, involved in base excision repair of DNA damaged by oxidation or by mutagenic agents. Acts as a DNA glycosylase that recognizes and removes damaged bases. Has a preference for oxidized purines, such as 7,8-dihydro-8-oxoguanine (8-oxoG). Has AP (apurinic/apyrimidinic) lyase activity and introduces nicks in the DNA strand. Cleaves the DNA backbone by beta-delta elimination to generate a single-strand break at the site of the removed base with both 3'- and 5'-phosphates. This is Formamidopyrimidine-DNA glycosylase from Burkholderia cenocepacia (strain ATCC BAA-245 / DSM 16553 / LMG 16656 / NCTC 13227 / J2315 / CF5610) (Burkholderia cepacia (strain J2315)).